The primary structure comprises 400 residues: Enoyl-[acyl-carrier-protein] reductase [NADH] (400 aa).

Residues 48-53 (GSSSGY), 74-75 (FE), 111-112 (DA), and 139-140 (LA) contribute to the NAD(+) site. Residue Y225 coordinates substrate. Y235 functions as the Proton donor in the catalytic mechanism. Residues K244 and 273–275 (VVT) each bind NAD(+).

This sequence belongs to the TER reductase family. Monomer.

The enzyme catalyses a 2,3-saturated acyl-[ACP] + NAD(+) = a (2E)-enoyl-[ACP] + NADH + H(+). The protein operates within lipid metabolism; fatty acid biosynthesis. In terms of biological role, involved in the final reduction of the elongation cycle of fatty acid synthesis (FAS II). Catalyzes the reduction of a carbon-carbon double bond in an enoyl moiety that is covalently linked to an acyl carrier protein (ACP). The chain is Enoyl-[acyl-carrier-protein] reductase [NADH] from Shewanella loihica (strain ATCC BAA-1088 / PV-4).